We begin with the raw amino-acid sequence, 477 residues long: Glycogen synthase (477 aa).

K15 contributes to the ADP-alpha-D-glucose binding site.

It belongs to the glycosyltransferase 1 family. Bacterial/plant glycogen synthase subfamily.

It carries out the reaction [(1-&gt;4)-alpha-D-glucosyl](n) + ADP-alpha-D-glucose = [(1-&gt;4)-alpha-D-glucosyl](n+1) + ADP + H(+). It participates in glycan biosynthesis; glycogen biosynthesis. Functionally, synthesizes alpha-1,4-glucan chains using ADP-glucose. The polypeptide is Glycogen synthase (Shigella sonnei (strain Ss046)).